We begin with the raw amino-acid sequence, 45 residues long: Large ribosomal subunit protein bL34 (45 aa).

It belongs to the bacterial ribosomal protein bL34 family.

The protein is Large ribosomal subunit protein bL34 of Leifsonia xyli subsp. xyli (strain CTCB07).